The chain runs to 330 residues: MKKPIVAVIAGGYSGEHSVSLKSAAGILSWLGSEPFSTFLVLIERDRWSVRVSEQREVPLDKNDFSFDLDGERIRFDYAYITIHGTPGENGLLQGYLDMIGIPYNTGDTLVESLTFNKYVCNRFLSGFGIRIADSMRLTGRDTQPDVADLIARMGLPLFVKPNVGGSSIATTKVVEAAQLLPAIEQAFSEGEEVMIERLICGTEVTCGAFLRKKEVVALPVTEVVAHNEFFDFDAKYNGAVEEITPARISDEATRLIQTMTARIYELLNARGIIRVDYIIEADGIPTLLEVNTTPGMTPTSFIPQQVRAAGMDMKEVLCTIIRDGLNETQ.

The ATP-grasp domain occupies 122–323 (NRFLSGFGIR…MKEVLCTIIR (202 aa)). 151 to 206 (IARMGLPLFVKPNVGGSSIATTKVVEAAQLLPAIEQAFSEGEEVMIERLICGTEVT) contacts ATP. Positions 277, 290, and 292 each coordinate Mg(2+).

This sequence belongs to the D-alanine--D-alanine ligase family. Mg(2+) is required as a cofactor. Mn(2+) serves as cofactor.

The protein localises to the cytoplasm. It catalyses the reaction 2 D-alanine + ATP = D-alanyl-D-alanine + ADP + phosphate + H(+). Its pathway is cell wall biogenesis; peptidoglycan biosynthesis. Functionally, cell wall formation. This chain is D-alanine--D-alanine ligase, found in Porphyromonas gingivalis (strain ATCC BAA-308 / W83).